The chain runs to 425 residues: Succinate--CoA ligase [ADP-forming] subunit beta, mitochondrial (425 aa).

Residues 1–14 (NNHGLQIQQQQQRN) constitute a mitochondrion transit peptide. The ATP-grasp domain occupies 23–250 (MELLQEAGVS…SNSAYRQKKI (228 aa)). At Lys40 the chain carries N6-acetyllysine. Phosphotyrosine is present on Tyr46. Position 50 is an N6-acetyllysine; alternate (Lys50). N6-succinyllysine; alternate is present on Lys50. Residues Lys60 and 67 to 69 (GRG) each bind ATP. An N6-acetyllysine mark is found at Lys91, Lys101, Lys105, and Lys178. Mg(2+) is bound by residues Asn220 and Asp234. Ser241 bears the Phosphoserine mark. Asn285 contacts substrate. The residue at position 303 (Thr303) is a Phosphothreonine. N6-acetyllysine is present on Lys330. 342 to 344 (GIM) lines the substrate pocket. Lys400 is subject to N6-acetyllysine.

Belongs to the succinate/malate CoA ligase beta subunit family. ATP-specific subunit beta subfamily. As to quaternary structure, heterodimer of an alpha and a beta subunit. The beta subunit determines specificity for ATP. Interacts with ALAS2. It depends on Mg(2+) as a cofactor.

It is found in the mitochondrion. It carries out the reaction succinate + ATP + CoA = succinyl-CoA + ADP + phosphate. It participates in carbohydrate metabolism; tricarboxylic acid cycle; succinate from succinyl-CoA (ligase route): step 1/1. ATP-specific succinyl-CoA synthetase functions in the citric acid cycle (TCA), coupling the hydrolysis of succinyl-CoA to the synthesis of ATP and thus represents the only step of substrate-level phosphorylation in the TCA. The beta subunit provides nucleotide specificity of the enzyme and binds the substrate succinate, while the binding sites for coenzyme A and phosphate are found in the alpha subunit. The sequence is that of Succinate--CoA ligase [ADP-forming] subunit beta, mitochondrial from Sus scrofa (Pig).